Here is a 70-residue protein sequence, read N- to C-terminus: MVELKVKTEMDVDRNLCNYCGACVGMCPTDAIWLDETVIKIHEEKCIECGFCIVGCPTGAITAEWFHGNL.

2 consecutive 4Fe-4S ferredoxin-type domains span residues Thr8–Glu36 and Thr37–Phe66. [4Fe-4S] cluster contacts are provided by Cys17, Cys20, Cys23, Cys27, Cys46, Cys49, Cys52, and Cys56.

The cofactor is [4Fe-4S] cluster.

In terms of biological role, ferredoxins are iron-sulfur proteins that transfer electrons in a wide variety of metabolic reactions. This Thermoplasma acidophilum (strain ATCC 25905 / DSM 1728 / JCM 9062 / NBRC 15155 / AMRC-C165) protein is Probable ferredoxin TA0517.